The primary structure comprises 987 residues: SNF2 domain-containing protein ENL1 (987 aa).

Disordered stretches follow at residues 1 to 172 (MASP…AYGG) and 224 to 245 (FGDYDDEDDIDQDAENGKENHA). Pro residues-rich tracts occupy residues 18–27 (TPPAPTPLAA) and 51–71 (NPNPNPNPNPKPPPPPPPQEP). Residues 99-110 (DSIRDILDDLTT) are compositionally biased toward basic and acidic residues. Over residues 141–156 (PSQSQLNDGTKPSSSF) the composition is skewed to polar residues. Residues 226 to 237 (DYDDEDDIDQDA) are compositionally biased toward acidic residues. The 175-residue stretch at 292 to 466 (WVLHCRGTGG…WALFYFCCPE (175 aa)) folds into the Helicase ATP-binding domain. 305–312 (DDMGLGKT) contacts ATP. A DEAH box motif is present at residues 417–420 (DEGH). Positions 645–801 (SLLQNLVSEG…TRYFSKRDIQ (157 aa)) constitute a Helicase C-terminal domain.

This sequence belongs to the SNF2/RAD54 helicase family. Expressed in ovaries, roots, shoots and leaves.

It localises to the cytoplasm. The protein localises to the chromosome. Its function is as follows. DNA helicase that acts as an essential component of the spindle assembly checkpoint. Plays an indispensable role in the development of seed endosperm. Is required to secure sister chromosome separation during endosperm syncytial mitosis, which involves extremely rapid free nuclear cycles. The protein is SNF2 domain-containing protein ENL1 of Oryza sativa subsp. japonica (Rice).